Reading from the N-terminus, the 441-residue chain is MRLSQYFLPLLKENPKEAEIVSHRFMLRAGMIRQQTSGIYSWLPLGKKVLDKVCKIIREEQERAGAIEILMPTIQSADLWRESGRYDDYGLEMLRIKDRQKRDLLYGPTNEEMVTDIFRSYVRSYKDLPLNLYHIQWKFRDEIRPRFGVMRAREFLMKDAYSFDLDYEGSKTSYNRMFVAYLRTFSRLGLKAIPMRADTGPIGGKLSHEFIILAETGESAIFCDKQFLELSVPNSSIDFSDKAVLDDTVKQWTSFYAATEEMHNEEEWARLSEENRLSARGIEVGHIFHFGTKYSAPMEAKVMGQDGKEHVVSMGSYGIGPSRLVAAAIEASHDEKGIIWPKSMAPFDFGIINMKPDDEKCTQACEFLYQGLKDAGFDPFLDDRNERPGSKFATMDLIGLPTQIIVGPNSIAHNEVEIKDRKTGAKKSLKVEDVLSQLSIL.

The protein belongs to the class-II aminoacyl-tRNA synthetase family. ProS type 2 subfamily. Homodimer.

The protein localises to the cytoplasm. The enzyme catalyses tRNA(Pro) + L-proline + ATP = L-prolyl-tRNA(Pro) + AMP + diphosphate. In terms of biological role, catalyzes the attachment of proline to tRNA(Pro) in a two-step reaction: proline is first activated by ATP to form Pro-AMP and then transferred to the acceptor end of tRNA(Pro). The sequence is that of Proline--tRNA ligase from Bartonella tribocorum (strain CIP 105476 / IBS 506).